The chain runs to 473 residues: Arginine biosynthesis bifunctional protein ArgJ, mitochondrial (473 aa).

Residues T201, K230, T241, E328, N468, and T473 each coordinate substrate. T241 functions as the Nucleophile in the catalytic mechanism.

It belongs to the ArgJ family. In terms of assembly, heterodimer of an alpha and a beta chain. Post-translationally, the alpha and beta chains are autoproteolytically processed from a single precursor protein within the mitochondrion.

It localises to the mitochondrion matrix. It catalyses the reaction N(2)-acetyl-L-ornithine + L-glutamate = N-acetyl-L-glutamate + L-ornithine. The catalysed reaction is L-glutamate + acetyl-CoA = N-acetyl-L-glutamate + CoA + H(+). It functions in the pathway amino-acid biosynthesis; L-arginine biosynthesis; L-ornithine and N-acetyl-L-glutamate from L-glutamate and N(2)-acetyl-L-ornithine (cyclic): step 1/1. The protein operates within amino-acid biosynthesis; L-arginine biosynthesis; N(2)-acetyl-L-ornithine from L-glutamate: step 1/4. Its function is as follows. Catalyzes two activities which are involved in the cyclic version of arginine biosynthesis: the synthesis of acetylglutamate from glutamate and acetyl-CoA, and of ornithine by transacetylation between acetylornithine and glutamate. This is Arginine biosynthesis bifunctional protein ArgJ, mitochondrial from Paracoccidioides lutzii (strain ATCC MYA-826 / Pb01) (Paracoccidioides brasiliensis).